A 212-amino-acid chain; its full sequence is Neuroendocrine protein 7B2 (212 aa).

An N-terminal signal peptide occupies residues 1 to 26; it reads MVSRMVSTMLSGLLFWLASGWTPAFA. Cys120 and Cys130 are disulfide-bonded. 2 positions are modified to phosphoserine: Ser141 and Ser205. The segment at 174–212 is disordered; sequence GGERRKRRSVNPYLQGQRLDNVVAKKSVPHFSDEDKDPE.

The protein belongs to the 7B2 family. Interacts with PCSK2/PC2 early in the secretory pathway. Dissociation occurs at later stages. Proteolytically cleaved in the Golgi by a furin-like convertase to generate bioactive peptides. In terms of processing, sulfated on tyrosine residues.

It is found in the secreted. Its function is as follows. Acts as a molecular chaperone for PCSK2/PC2, preventing its premature activation in the regulated secretory pathway. Binds to inactive PCSK2 in the endoplasmic reticulum and facilitates its transport from there to later compartments of the secretory pathway where it is proteolytically matured and activated. Also required for cleavage of PCSK2 but does not appear to be involved in its folding. Plays a role in regulating pituitary hormone secretion. The C-terminal peptide inhibits PCSK2 in vitro. This Homo sapiens (Human) protein is Neuroendocrine protein 7B2 (SCG5).